The sequence spans 373 residues: STE20-related kinase adapter protein alpha (373 aa).

In terms of domain architecture, Protein kinase spans 11 to 321 (YELLTVIGKG…ASTLLNHSFF (311 aa)). The segment covering 255–281 (STSRSAANSGLSESLAPSTPRTSNGDS) has biased composition (polar residues). The interval 255–288 (STSRSAANSGLSESLAPSTPRTSNGDSPSHPYHR) is disordered. Residue Thr-361 is modified to Phosphothreonine; by LKB1.

It belongs to the protein kinase superfamily. STE Ser/Thr protein kinase family. STE20 subfamily. In terms of assembly, component of a trimeric complex composed of STK11/LKB1, STRAD (STRADA or STRADB) and CAB39/MO25 (CAB39/MO25alpha or CAB39L/MO25beta): the complex tethers STK11/LKB1 in the cytoplasm and stimulates its catalytic activity.

The protein resides in the nucleus. It localises to the cytoplasm. In terms of biological role, pseudokinase which, in complex with CAB39/MO25 (CAB39/MO25alpha or CAB39L/MO25beta), binds to and activates STK11/LKB1. Adopts a closed conformation typical of active protein kinases and binds STK11/LKB1 as a pseudosubstrate, promoting conformational change of STK11/LKB1 in an active conformation. The protein is STE20-related kinase adapter protein alpha (STRADA) of Bos taurus (Bovine).